The chain runs to 460 residues: Probable serine/threonine-protein kinase kinase DDB_G0280557 (460 aa).

In terms of domain architecture, Protein kinase spans 102 to 416 (INLKSITDCG…IDQLLAHKYF (315 aa)). Residues K131 and 154 to 162 (QRHFQQHPL) contribute to the ATP site. The active-site Proton acceptor is D250.

The protein belongs to the protein kinase superfamily. CMGC Ser/Thr protein kinase family. MAP kinase subfamily.

The enzyme catalyses L-seryl-[protein] + ATP = O-phospho-L-seryl-[protein] + ADP + H(+). It catalyses the reaction L-threonyl-[protein] + ATP = O-phospho-L-threonyl-[protein] + ADP + H(+). This is Probable serine/threonine-protein kinase kinase DDB_G0280557 from Dictyostelium discoideum (Social amoeba).